Reading from the N-terminus, the 161-residue chain is MGTTWRSPGLVRLALCLAGLALSLYALHVKAARARDENYRALCDVGTAISCSRVFSSRWGRGFGLVEHMLGADSVLNQSNSIFGCLFYTLQLLLGCLRGRWASILLVLSSLVSVAGSVYLAWILFFVLYDFCIVCITTYAINVGLMLLSFQKVPEHKTKKH.

The Cytoplasmic portion of the chain corresponds to 1–9; sequence MGTTWRSPG. Residues 10–29 traverse the membrane as a helical segment; the sequence is LVRLALCLAGLALSLYALHV. The Lumenal segment spans residues 30 to 80; that stretch reads KAARARDENYRALCDVGTAISCSRVFSSRWGRGFGLVEHMLGADSVLNQSN. Residues Cys-43 and Cys-51 are joined by a disulfide bond. Residue Asn-80 participates in (S)-warfarin binding. The helical transmembrane segment at 81–95 threads the bilayer; sequence SIFGCLFYTLQLLLG. Residues 96–100 lie on the Cytoplasmic side of the membrane; sequence CLRGR. The chain crosses the membrane as a helical span at residues 101–128; the sequence is WASILLVLSSLVSVAGSVYLAWILFFVL. Residues 129-131 are Lumenal-facing; that stretch reads YDF. A disulfide bond links Cys-132 and Cys-135. The helical transmembrane segment at 132 to 153 threads the bilayer; it reads CIVCITTYAINVGLMLLSFQKV. Phylloquinone contacts are provided by Cys-135 and Tyr-139. Tyr-139 contributes to the (S)-warfarin binding site. The Cytoplasmic portion of the chain corresponds to 154–161; sequence PEHKTKKH.

This sequence belongs to the VKOR family. Detected in liver.

Its subcellular location is the endoplasmic reticulum membrane. It catalyses the reaction phylloquinone + [protein]-disulfide + H2O = 2,3-epoxyphylloquinone + [protein]-dithiol. The enzyme catalyses phylloquinol + [protein]-disulfide = phylloquinone + [protein]-dithiol. Its activity is regulated as follows. Inhibited by warfarin (coumadin). Warfarin locks VKORC1 in both redox states into the closed conformation. In terms of biological role, involved in vitamin K metabolism. Catalytic subunit of the vitamin K epoxide reductase (VKOR) complex which reduces inactive vitamin K 2,3-epoxide to active vitamin K. Vitamin K is required for the gamma-carboxylation of various proteins, including clotting factors, and is required for normal blood coagulation, but also for normal bone development. This Mus musculus (Mouse) protein is Vitamin K epoxide reductase complex subunit 1 (Vkorc1).